We begin with the raw amino-acid sequence, 591 residues long: Guanylate-binding protein 2 (591 aa).

The segment at 1–309 is GTPase domain (Globular); that stretch reads MAPEINLPGP…NAISSGDLPC (309 aa). The region spanning 35-276 is the GB1/RHD3-type G domain; it reads TQPVVVVAIV…FCSYILSHSN (242 aa). Residues 45–52, 181–182, and Leu-245 contribute to the GTP site; these read GLYRTGKS and RD. Residue Cys-588 is modified to Cysteine methyl ester. Cys-588 is lipidated: S-geranylgeranyl cysteine. Positions 589 to 591 are cleaved as a propeptide — removed in mature form; sequence NIL.

It belongs to the TRAFAC class dynamin-like GTPase superfamily. GB1/RHD3 GTPase family. GB1 subfamily. Homodimer; homodimerization occurs upon GTP-binding and is required for the association with membranous structures. Heterodimer with other family members, including GBP1, GBP3, GBP4 and GBP5. In terms of processing, (Microbial infection) Ubiquitinated by S.flexneri IpaH9.8, leading to its degradation by the proteasome, thereby preventing its ability to promote host defense against bacterial infection. Post-translationally, isoprenylation is required for proper subcellular location.

The protein resides in the cytoplasmic vesicle membrane. It localises to the golgi apparatus membrane. Its subcellular location is the cytoplasm. The protein localises to the perinuclear region. The catalysed reaction is GTP + H2O = GDP + phosphate + H(+). In terms of biological role, interferon (IFN)-inducible GTPase that plays important roles in innate immunity against a diverse range of bacterial, viral and protozoan pathogens. Hydrolyzes GTP to GMP in 2 consecutive cleavage reactions, but the major reaction product is GDP. Following infection, recruited to the pathogen-containing vacuoles or vacuole-escaped bacteria and acts as a positive regulator of inflammasome assembly by promoting the release of inflammasome ligands from bacteria. Acts by promoting lysis of pathogen-containing vacuoles, releasing pathogens into the cytosol. Following pathogen release in the cytosol, promotes recruitment of proteins that mediate bacterial cytolysis: this liberates ligands that are detected by inflammasomes, such as lipopolysaccharide (LPS) that activates the non-canonical CASP4/CASP11 inflammasome or double-stranded DNA (dsDNA) that activates the AIM2 inflammasome. Confers protection to the protozoan pathogen Toxoplasma gondii. Independently of its GTPase activity, acts as an inhibitor of various viruses infectivity, such as HIV-1, Zika and influenza A viruses, by inhibiting FURIN-mediated maturation of viral envelope proteins. The sequence is that of Guanylate-binding protein 2 from Homo sapiens (Human).